The chain runs to 957 residues: UvrABC system protein A (957 aa).

Position 33-40 (Gly-33–Ser-40) interacts with ATP. Residues Cys-252–Cys-279 form a C4-type zinc finger. ABC transporter domains lie at Trp-309–Leu-587 and Pro-607–Arg-935. Gly-639–Ser-646 is an ATP binding site. The C4-type zinc-finger motif lies at Cys-738 to Cys-764.

It belongs to the ABC transporter superfamily. UvrA family. Forms a heterotetramer with UvrB during the search for lesions.

Its subcellular location is the cytoplasm. Functionally, the UvrABC repair system catalyzes the recognition and processing of DNA lesions. UvrA is an ATPase and a DNA-binding protein. A damage recognition complex composed of 2 UvrA and 2 UvrB subunits scans DNA for abnormalities. When the presence of a lesion has been verified by UvrB, the UvrA molecules dissociate. The chain is UvrABC system protein A from Halalkalibacterium halodurans (strain ATCC BAA-125 / DSM 18197 / FERM 7344 / JCM 9153 / C-125) (Bacillus halodurans).